A 780-amino-acid chain; its full sequence is Mediator of RNA polymerase II transcription subunit 15 (780 aa).

The segment at 1–124 is interaction with nhr-49; the sequence is MSEEDWPSPK…PQPTSAQARN (124 aa). The segment at 2–96 is interaction with sbp-1; it reads SEEDWPSPKF…SPPCTTAALL (95 aa). Disordered regions lie at residues 91–152, 166–363, and 564–597; these read TTAA…APSA, PSPD…QGMM, and GPGP…GTPN. The span at 125–139 shows a compositional bias: low complexity; it reads PPVTVATTQASTTPS. Over residues 225-245 the composition is skewed to gly residues; it reads PPNGYGGYGMMNGPPGSGAPM. A compositionally biased stretch (polar residues) spans 296–316; the sequence is QGATPTGPSSVLESLINQPQQ. Composition is skewed to low complexity over residues 333-353 and 574-594; these read AAQR…QQQR and SMSG…NPMG.

Belongs to the Mediator complex subunit 15 family. Component of the Mediator complex. Interacts with nhr-49, nhr-64 and sbp-1. As to expression, expressed in the intestine and head neurons.

It is found in the nucleus. In terms of biological role, component of the Mediator complex, a coactivator involved in regulated gene transcription of nearly all RNA polymerase II-dependent genes. Mediator functions as a bridge to convey information from gene-specific regulatory proteins to the basal RNA polymerase II transcription machinery. Mediator is recruited to promoters by direct interactions with regulatory proteins and serves as a scaffold for the assembly of a functional preinitiation complex with RNA polymerase II and the general transcription factors. Required for regulated expression of genes controlling fatty acid desaturation by transcription factors including sbp-1 and nhr-49. Involved in the response to simulated microgravity, in concert with sbp-1, probably acting in the intestine. This is Mediator of RNA polymerase II transcription subunit 15 (mdt-15) from Caenorhabditis elegans.